The chain runs to 335 residues: MPRLVLASAPAKIILFGEHSVVYGKPAIASAIDLRTYVRAEFNDSGNIKIEAHDIKTPGLIVSFSEDKIYFETDYGKAAEVLSYVRHAIELVLEEADKRTGVSVSITSQIPVGAGLGSSAAVAVATIGAVSKLLDLELSKEEIAKMGHKVELLVQGASSGIDPTVSAIGGFLYYKQGEFEHLPFVELPIVVGYTGSSGSTKELVAMVRRRYEEMPELIEPILESMGKLVDKAKEVIISKLDEEEKFLKLGELMNINHGLLDALGVSTKKLSELVYAARTAGAIGAKLTGAGGGGCMYALAPGKQREVATAIKIAGGTPMITRISKEGLRIEEVRE.

111 to 121 (PVGAGLGSSAA) lines the ATP pocket. The Proton acceptor role is filled by aspartate 162.

It belongs to the GHMP kinase family. Mevalonate kinase subfamily. As to quaternary structure, homodimer. It depends on Mg(2+) as a cofactor.

It is found in the cytoplasm. It catalyses the reaction (R)-mevalonate + ATP = (R)-5-phosphomevalonate + ADP + H(+). It functions in the pathway isoprenoid biosynthesis; isopentenyl diphosphate biosynthesis via mevalonate pathway; isopentenyl diphosphate from (R)-mevalonate: step 1/3. Its function is as follows. Catalyzes the phosphorylation of (R)-mevalonate (MVA) to (R)-mevalonate 5-phosphate (MVAP). Functions in the mevalonate (MVA) pathway leading to isopentenyl diphosphate (IPP), a key precursor for the biosynthesis of isoprenoid compounds such as archaeal membrane lipids. In Pyrococcus abyssi (strain GE5 / Orsay), this protein is Mevalonate kinase.